Consider the following 120-residue polypeptide: Small ribosomal subunit protein uS13 (120 aa).

Residues 93–120 (RRGLPCRGQKTKTNARTRKGKRKTVGAA) form a disordered region.

This sequence belongs to the universal ribosomal protein uS13 family. In terms of assembly, part of the 30S ribosomal subunit. Forms a loose heterodimer with protein S19. Forms two bridges to the 50S subunit in the 70S ribosome.

Functionally, located at the top of the head of the 30S subunit, it contacts several helices of the 16S rRNA. In the 70S ribosome it contacts the 23S rRNA (bridge B1a) and protein L5 of the 50S subunit (bridge B1b), connecting the 2 subunits; these bridges are implicated in subunit movement. Contacts the tRNAs in the A and P-sites. This Sulfurimonas denitrificans (strain ATCC 33889 / DSM 1251) (Thiomicrospira denitrificans (strain ATCC 33889 / DSM 1251)) protein is Small ribosomal subunit protein uS13.